The chain runs to 500 residues: Apolipoprotein N-acyltransferase (500 aa).

6 consecutive transmembrane segments (helical) span residues 5–25 (VAPF…WIFV), 38–58 (LLLL…FWIT), 74–94 (LAIT…FGAI), 111–131 (ILIG…GPLW), 145–165 (AILH…IVSV), and 185–205 (LAIA…LYTA). The 248-residue stretch at 215–462 (LKVGIVQGNI…ETIYRRQTQN (248 aa)) folds into the CN hydrolase domain. E261 (proton acceptor) is an active-site residue. Residue K318 is part of the active site. C369 functions as the Nucleophile in the catalytic mechanism. The helical transmembrane segment at 469-489 (DWFTPLLVGLSFLGWSLNIFW) threads the bilayer.

The protein belongs to the CN hydrolase family. Apolipoprotein N-acyltransferase subfamily.

The protein resides in the cell inner membrane. The enzyme catalyses N-terminal S-1,2-diacyl-sn-glyceryl-L-cysteinyl-[lipoprotein] + a glycerophospholipid = N-acyl-S-1,2-diacyl-sn-glyceryl-L-cysteinyl-[lipoprotein] + a 2-acyl-sn-glycero-3-phospholipid + H(+). It functions in the pathway protein modification; lipoprotein biosynthesis (N-acyl transfer). Functionally, catalyzes the phospholipid dependent N-acylation of the N-terminal cysteine of apolipoprotein, the last step in lipoprotein maturation. The chain is Apolipoprotein N-acyltransferase from Nostoc sp. (strain PCC 7120 / SAG 25.82 / UTEX 2576).